Here is a 159-residue protein sequence, read N- to C-terminus: 3-dehydroquinate dehydratase (159 aa).

Tyr22 acts as the Proton acceptor in catalysis. The substrate site is built by Asn73, His79, and Asp86. The active-site Proton donor is the His99. Substrate is bound by residues 100–101 (IS) and Arg110.

The protein belongs to the type-II 3-dehydroquinase family. In terms of assembly, homododecamer.

The enzyme catalyses 3-dehydroquinate = 3-dehydroshikimate + H2O. The protein operates within metabolic intermediate biosynthesis; chorismate biosynthesis; chorismate from D-erythrose 4-phosphate and phosphoenolpyruvate: step 3/7. Functionally, catalyzes a trans-dehydration via an enolate intermediate. This chain is 3-dehydroquinate dehydratase, found in Campylobacter jejuni subsp. jejuni serotype O:6 (strain 81116 / NCTC 11828).